Here is a 133-residue protein sequence, read N- to C-terminus: 6,7-dimethyl-8-ribityllumazine synthase (133 aa).

Residues Phe-11, 43-45, and 67-69 contribute to the 5-amino-6-(D-ribitylamino)uracil site; these read AYD and AIV. 72 to 73 is a binding site for (2S)-2-hydroxy-3-oxobutyl phosphate; it reads DT. His-75 acts as the Proton donor in catalysis. Phe-100 lines the 5-amino-6-(D-ribitylamino)uracil pocket. A (2S)-2-hydroxy-3-oxobutyl phosphate-binding site is contributed by Arg-115.

It belongs to the DMRL synthase family.

The enzyme catalyses (2S)-2-hydroxy-3-oxobutyl phosphate + 5-amino-6-(D-ribitylamino)uracil = 6,7-dimethyl-8-(1-D-ribityl)lumazine + phosphate + 2 H2O + H(+). Its pathway is cofactor biosynthesis; riboflavin biosynthesis; riboflavin from 2-hydroxy-3-oxobutyl phosphate and 5-amino-6-(D-ribitylamino)uracil: step 1/2. Functionally, catalyzes the formation of 6,7-dimethyl-8-ribityllumazine by condensation of 5-amino-6-(D-ribitylamino)uracil with 3,4-dihydroxy-2-butanone 4-phosphate. This is the penultimate step in the biosynthesis of riboflavin. The polypeptide is 6,7-dimethyl-8-ribityllumazine synthase (Halobacterium salinarum (strain ATCC 29341 / DSM 671 / R1)).